A 92-amino-acid chain; its full sequence is Neurophysin 2 (92 aa).

7 disulfides stabilise this stretch: Cys10–Cys54, Cys13–Cys27, Cys21–Cys44, Cys28–Cys34, Cys61–Cys73, Cys67–Cys85, and Cys74–Cys79.

Belongs to the vasopressin/oxytocin family. In terms of assembly, there is an equilibrium between the monomeric and dimeric forms. On peptide binding the dimeric form predominates. A shorter neurophysin molecule (1-90) also exists and is probably derived from the complete protein by proteolytic degradation (in vivo or after extraction).

Its subcellular location is the secreted. Functionally, neurophysin 2 specifically binds vasopressin. The protein is Neurophysin 2 (AVP) of Loxodonta africana (African elephant).